The sequence spans 202 residues: Holliday junction branch migration complex subunit RuvA (202 aa).

A domain I region spans residues 1–65; sequence MIGYLEGRVV…EDALELFGFA (65 aa). The segment at 66–144 is domain II; the sequence is SLDDRETFRT…GRAPAAGLAP (79 aa). The flexible linker stretch occupies residues 145-155; the sequence is SVPIPGGVAGD. Residues 155-202 are domain III; sequence DVVAGLTNLGYPEPEARQVAAEVLEAEPDLDVAAALRQALKRLASAKK.

Belongs to the RuvA family. Homotetramer. Forms an RuvA(8)-RuvB(12)-Holliday junction (HJ) complex. HJ DNA is sandwiched between 2 RuvA tetramers; dsDNA enters through RuvA and exits via RuvB. An RuvB hexamer assembles on each DNA strand where it exits the tetramer. Each RuvB hexamer is contacted by two RuvA subunits (via domain III) on 2 adjacent RuvB subunits; this complex drives branch migration. In the full resolvosome a probable DNA-RuvA(4)-RuvB(12)-RuvC(2) complex forms which resolves the HJ.

The protein localises to the cytoplasm. Functionally, the RuvA-RuvB-RuvC complex processes Holliday junction (HJ) DNA during genetic recombination and DNA repair, while the RuvA-RuvB complex plays an important role in the rescue of blocked DNA replication forks via replication fork reversal (RFR). RuvA specifically binds to HJ cruciform DNA, conferring on it an open structure. The RuvB hexamer acts as an ATP-dependent pump, pulling dsDNA into and through the RuvAB complex. HJ branch migration allows RuvC to scan DNA until it finds its consensus sequence, where it cleaves and resolves the cruciform DNA. This Solidesulfovibrio magneticus (strain ATCC 700980 / DSM 13731 / RS-1) (Desulfovibrio magneticus) protein is Holliday junction branch migration complex subunit RuvA.